The chain runs to 119 residues: Myohemerythrin-1 (119 aa).

His-25, His-55, Asn-58, Glu-59, His-74, His-78, His-107, and Asp-112 together coordinate Fe cation.

It belongs to the hemerythrin family. As to quaternary structure, monomer. As to expression, muscle.

In terms of biological role, myohemerythrin is an oxygen-binding protein found in the retractor muscles of certain worms. The oxygen-binding site contains two iron atoms. This Phascolopsis gouldii (Peanut worm) protein is Myohemerythrin-1.